The following is a 345-amino-acid chain: MASMTGGQQMGTNQGKGVVAAGDKLALFLKVFGGEVLTAFARTSVTTSRHMVRSISSGKSAQFPVLGRTQAAYLAPGENLDDKRKDIKHTEKVITIDGLLTADVLIYDIEDAMNHYDVRSEYTSQLGESLAMAADGAVLAEIAGLCNVESKYNENIEGLGTATVIETTQNKAALTDQVALGKEIIAALTKARAALTKNYVPAADRVFYCDPDSYSAILAALMPNAANYAALIDPEKGSIRNVMGFEVVEVPHLTAGGAGTAREGTTGQKHVFPANKGEGNVKVAKDNVIGLFMHRSAVGTVKLRDLALERARRANFQADQIIAKYAMGHGGLRPEAAGAVVFKVE.

Intercapsomeric interactions stretches follow at residues 11–25 (GTNQ…GDKL) and 152–156 (YNENI).

This sequence belongs to the T7virus major capsid protein family. Homohexamer. Interacts with the connector protein and the minor capsid protein. Interacts with the capsid assembly scaffolding protein; capsid proteins and scaffolding proteins form building blocks that assemble to form the procapsid, each hexamer of the major capsid protein interacting with 2 scaffolding proteins.

The protein resides in the virion. Assembles with the minor capsid protein to form an icosahedral capsid with a T=7 symmetry, about 60 nm in diameter, and consisting of 415 capsid proteins. The major and minor capsid proteins are incorporated into the capsid in about a 90/10 ratio respectively. Once the capsid is formed, encapsidates one single copy of the viral genome. The sequence is that of Major capsid protein from Escherichia coli (Bacteriophage T7).